The following is a 147-amino-acid chain: 3-dehydroquinate dehydratase (147 aa).

Tyrosine 23 functions as the Proton acceptor in the catalytic mechanism. Asparagine 74, histidine 80, and aspartate 87 together coordinate substrate. Residue histidine 100 is the Proton donor of the active site. Substrate-binding positions include 101-102 (LS) and arginine 111.

Belongs to the type-II 3-dehydroquinase family. Homododecamer.

The catalysed reaction is 3-dehydroquinate = 3-dehydroshikimate + H2O. It functions in the pathway metabolic intermediate biosynthesis; chorismate biosynthesis; chorismate from D-erythrose 4-phosphate and phosphoenolpyruvate: step 3/7. Catalyzes a trans-dehydration via an enolate intermediate. This chain is 3-dehydroquinate dehydratase, found in Clostridium botulinum (strain Kyoto / Type A2).